Reading from the N-terminus, the 113-residue chain is Ribulose bisphosphate carboxylase small subunit (113 aa).

Belongs to the RuBisCO small chain family. Heterohexadecamer of 8 large and 8 small subunits.

It is found in the carboxysome. In terms of biological role, ruBisCO catalyzes two reactions: the carboxylation of D-ribulose 1,5-bisphosphate, the primary event in carbon dioxide fixation, as well as the oxidative fragmentation of the pentose substrate in the photorespiration process. Both reactions occur simultaneously and in competition at the same active site. Although the small subunit is not catalytic it is essential for maximal activity. The sequence is that of Ribulose bisphosphate carboxylase small subunit from Synechococcus sp. (strain WH7803).